A 67-amino-acid chain; its full sequence is Conotoxin LeDr192 (67 aa).

Positions 1-19 (MRCFPVFIILLLLIASAPC) are cleaved as a signal peptide. Positions 20-49 (FDARTKTDDDVPLSPLRDNLKRTIRTRLNI) are excised as a propeptide. A Threonine amide modification is found at T65.

It belongs to the conotoxin T superfamily. Contains 2 disulfide bonds that can be either 'C1-C3, C2-C4' or 'C1-C4, C2-C3', since these disulfide connectivities have been observed for conotoxins with cysteine framework V (for examples, see AC P0DQQ7 and AC P81755). As to expression, expressed by the venom duct.

Its subcellular location is the secreted. The protein is Conotoxin LeDr192 of Conus litteratus (Lettered cone).